The following is a 537-amino-acid chain: CTP synthase (537 aa).

The segment at 1–268 (MGETKYIFVT…DSTILEKMGL (268 aa)) is amidoligase domain. Ser15 lines the CTP pocket. Ser15 provides a ligand contact to UTP. Residue 16-21 (SLGKGI) participates in ATP binding. Tyr56 contacts L-glutamine. Position 73 (Asp73) interacts with ATP. Residues Asp73 and Glu143 each coordinate Mg(2+). CTP-binding positions include 150–152 (DIE), 189–194 (KTKPTQ), and Lys225. Residues 189–194 (KTKPTQ) and Lys225 contribute to the UTP site. In terms of domain architecture, Glutamine amidotransferase type-1 spans 296-537 (NIALVGKYDL…VKAAIENEKN (242 aa)). L-glutamine is bound at residue Gly357. Cys384 functions as the Nucleophile; for glutamine hydrolysis in the catalytic mechanism. Residues 385–388 (LGMQ), Glu408, and Arg465 contribute to the L-glutamine site. Active-site residues include His510 and Glu512.

This sequence belongs to the CTP synthase family. In terms of assembly, homotetramer.

It carries out the reaction UTP + L-glutamine + ATP + H2O = CTP + L-glutamate + ADP + phosphate + 2 H(+). The enzyme catalyses L-glutamine + H2O = L-glutamate + NH4(+). The catalysed reaction is UTP + NH4(+) + ATP = CTP + ADP + phosphate + 2 H(+). It functions in the pathway pyrimidine metabolism; CTP biosynthesis via de novo pathway; CTP from UDP: step 2/2. Its activity is regulated as follows. Allosterically activated by GTP, when glutamine is the substrate; GTP has no effect on the reaction when ammonia is the substrate. The allosteric effector GTP functions by stabilizing the protein conformation that binds the tetrahedral intermediate(s) formed during glutamine hydrolysis. Inhibited by the product CTP, via allosteric rather than competitive inhibition. Its function is as follows. Catalyzes the ATP-dependent amination of UTP to CTP with either L-glutamine or ammonia as the source of nitrogen. Regulates intracellular CTP levels through interactions with the four ribonucleotide triphosphates. This Bacteroides thetaiotaomicron (strain ATCC 29148 / DSM 2079 / JCM 5827 / CCUG 10774 / NCTC 10582 / VPI-5482 / E50) protein is CTP synthase.